Here is a 133-residue protein sequence, read N- to C-terminus: Small ribosomal subunit protein uS8 (133 aa).

Belongs to the universal ribosomal protein uS8 family. In terms of assembly, part of the 30S ribosomal subunit. Contacts proteins S5 and S12.

Its function is as follows. One of the primary rRNA binding proteins, it binds directly to 16S rRNA central domain where it helps coordinate assembly of the platform of the 30S subunit. The sequence is that of Small ribosomal subunit protein uS8 from Prochlorococcus marinus (strain MIT 9303).